Here is a 234-residue protein sequence, read N- to C-terminus: Leucyl/phenylalanyl-tRNA--protein transferase (234 aa).

The protein belongs to the L/F-transferase family.

It is found in the cytoplasm. It catalyses the reaction N-terminal L-lysyl-[protein] + L-leucyl-tRNA(Leu) = N-terminal L-leucyl-L-lysyl-[protein] + tRNA(Leu) + H(+). The catalysed reaction is N-terminal L-arginyl-[protein] + L-leucyl-tRNA(Leu) = N-terminal L-leucyl-L-arginyl-[protein] + tRNA(Leu) + H(+). The enzyme catalyses L-phenylalanyl-tRNA(Phe) + an N-terminal L-alpha-aminoacyl-[protein] = an N-terminal L-phenylalanyl-L-alpha-aminoacyl-[protein] + tRNA(Phe). In terms of biological role, functions in the N-end rule pathway of protein degradation where it conjugates Leu, Phe and, less efficiently, Met from aminoacyl-tRNAs to the N-termini of proteins containing an N-terminal arginine or lysine. The sequence is that of Leucyl/phenylalanyl-tRNA--protein transferase from Syntrophobacter fumaroxidans (strain DSM 10017 / MPOB).